A 1065-amino-acid polypeptide reads, in one-letter code: Tubulin glycylase 3C (1065 aa).

Disordered regions lie at residues 1–146 (MSSL…REDK), 158–182 (IREQ…TKSK), 301–326 (STQK…DIAK), 341–360 (EKKR…KEQL), 381–482 (FFVD…GNGS), and 708–755 (NKQK…EKQM). The segment covering 23–53 (QEGNQEDLNNQNDHNLNNNELDSLSSPPSDN) has biased composition (low complexity). A compositionally biased stretch (acidic residues) spans 54–63 (YNEEEFEQED). Residues 73-92 (QNASQNNISQTQRISQTQLP) are compositionally biased toward polar residues. The span at 122–146 (LMEKKKKEQEEKEKKELKLKKREDK) shows a compositional bias: basic and acidic residues. Positions 166-179 (LESQTEQSDHSNVT) are enriched in polar residues. Basic and acidic residues predominate over residues 313 to 326 (EGDKEKDDKKDIAK). Positions 385–403 (VPEKKPKKEKKKNESKEDN) are enriched in basic and acidic residues. The segment covering 404–423 (IQITSPKLNSTKSLSSQITR) has biased composition (polar residues). Positions 424–450 (KTNDAKKVEKLPKIKDSNKENHSKERN) are enriched in basic and acidic residues. Residues 451-479 (EDNEEGDDGEYECDEGDEGASDGEDEDDG) show a composition bias toward acidic residues. The TTL domain maps to 633–1009 (YFEKDPDIEK…DYGMEKSKKA (377 aa)). Residues 709 to 721 (KQKPKKKKKKSKK) show a composition bias toward basic residues. Residues 722 to 733 (DKQQGDTEKKEE) show a composition bias toward basic and acidic residues. Residues 734–754 (EEGEAEDEEEDEEDEEEEEKQ) show a composition bias toward acidic residues. Residues 821–824 (QKYI), lysine 834, and aspartate 836 contribute to the ATP site.

It is found in the cell projection. The protein resides in the cilium. It localises to the cytoplasm. The protein localises to the cytoskeleton. Its subcellular location is the cilium axoneme. Probable glycylase which modifies tubulin, generating side chains of glycine on the gamma-carboxyl groups of specific glutamate residues within the C-terminal tail of tubulin. This Tetrahymena thermophila (strain SB210) protein is Tubulin glycylase 3C (TTLL3C).